We begin with the raw amino-acid sequence, 932 residues long: Isoleucine--tRNA ligase (932 aa).

The short motif at 58-68 (PYANGNLHLGH) is the 'HIGH' region element. Residue E567 coordinates L-isoleucyl-5'-AMP. Positions 608 to 612 (KMSKS) match the 'KMSKS' region motif. K611 provides a ligand contact to ATP. Residues C895, C898, C915, and C918 each contribute to the Zn(2+) site.

This sequence belongs to the class-I aminoacyl-tRNA synthetase family. IleS type 1 subfamily. In terms of assembly, monomer. Zn(2+) serves as cofactor.

It localises to the cytoplasm. The catalysed reaction is tRNA(Ile) + L-isoleucine + ATP = L-isoleucyl-tRNA(Ile) + AMP + diphosphate. In terms of biological role, catalyzes the attachment of isoleucine to tRNA(Ile). As IleRS can inadvertently accommodate and process structurally similar amino acids such as valine, to avoid such errors it has two additional distinct tRNA(Ile)-dependent editing activities. One activity is designated as 'pretransfer' editing and involves the hydrolysis of activated Val-AMP. The other activity is designated 'posttransfer' editing and involves deacylation of mischarged Val-tRNA(Ile). The chain is Isoleucine--tRNA ligase from Azoarcus sp. (strain BH72).